The chain runs to 353 residues: Inactive ubiquitin thioesterase OTULINL (353 aa).

The segment at 1-80 (MKATRSAPRE…KWWIGYLQRK (80 aa)) is required for membrane binding. Residues 125–353 (KCVRPVKRDN…NDHQYHIPVF (229 aa)) form the OTU domain.

This sequence belongs to the peptidase C65 family. Otulin subfamily. As to quaternary structure, does not bind ubiquitin or ubiquitin-like proteins.

It localises to the cytoplasm. The protein localises to the endoplasmic reticulum membrane. Its subcellular location is the nucleus envelope. Functionally, lacks deubiquitinase activity. The protein is Inactive ubiquitin thioesterase OTULINL of Rattus norvegicus (Rat).